Reading from the N-terminus, the 723-residue chain is Envelope glycoprotein H (723 aa).

Positions 1 to 23 (MSPATRFTVISCLVVSLITPSET) are cleaved as a signal peptide. At 24–700 (SSWFDPFIEW…IIDIRQTSIF (677 aa)) the chain is on the virion surface side. 4 N-linked (GlcNAc...) asparagine; by host glycosylation sites follow: Asn39, Asn45, Asn144, and Asn174. An interaction with gL region spans residues 197–263 (HQFAIVLTFT…QSYRDDLLIV (67 aa)). 6 N-linked (GlcNAc...) asparagine; by host glycosylation sites follow: Asn270, Asn340, Asn411, Asn543, Asn621, and Asn681. A helical transmembrane segment spans residues 701 to 721 (MIMLYCSLGVLLLYGLYRLLH). Topologically, residues 722–723 (MI) are intravirion.

It belongs to the herpesviridae glycoprotein H family. In terms of assembly, interacts with glycoprotein L (gL); this interaction is necessary for the correct processing and cell surface expression of gH. The heterodimer gH/gL seems to interact with gB trimers during fusion. Post-translationally, N-glycosylated, O-glycosylated, and sialylated.

The protein localises to the virion membrane. It localises to the host cell membrane. Its subcellular location is the host endosome membrane. The heterodimer glycoprotein H-glycoprotein L is required for the fusion of viral and plasma membranes leading to virus entry into the host cell. Following initial binding to host receptor, membrane fusion is mediated by the fusion machinery composed of gB and the heterodimer gH/gL. May also be involved in the fusion between the virion envelope and the outer nuclear membrane during virion morphogenesis. This Guinea pig cytomegalovirus (strain 22122) (GPCMV) protein is Envelope glycoprotein H.